A 200-amino-acid polypeptide reads, in one-letter code: Ciliary microtubule inner protein 2C (200 aa).

The protein belongs to the CIMIP2 family. As to quaternary structure, microtubule inner protein component of sperm flagellar doublet microtubules.

It is found in the cytoplasm. It localises to the cytoskeleton. Its subcellular location is the cilium axoneme. The protein resides in the flagellum axoneme. Functionally, microtubule inner protein (MIP) part of the dynein-decorated doublet microtubules (DMTs) in cilia axoneme, which is required for motile cilia beating. Binds to the intra-tubulin interfaces. The chain is Ciliary microtubule inner protein 2C (Cimip2c) from Mus musculus (Mouse).